The following is a 172-amino-acid chain: UBA-like domain-containing protein 2 (172 aa).

Positions 118–130 (PPNQQPVWLPPSS) are enriched in pro residues. Residues 118–172 (PPNQQPVWLPPSSPTGHHTLHHHHHHMHPPPSWPPVSQPANGPQTPVISALHGQR) are disordered. The segment covering 135–145 (HTLHHHHHHMH) has biased composition (basic residues).

The protein belongs to the UBALD family.

The sequence is that of UBA-like domain-containing protein 2 (ubald2) from Danio rerio (Zebrafish).